The sequence spans 571 residues: Proline--tRNA ligase (571 aa).

The protein belongs to the class-II aminoacyl-tRNA synthetase family. ProS type 1 subfamily. In terms of assembly, homodimer.

It localises to the cytoplasm. It carries out the reaction tRNA(Pro) + L-proline + ATP = L-prolyl-tRNA(Pro) + AMP + diphosphate. Its function is as follows. Catalyzes the attachment of proline to tRNA(Pro) in a two-step reaction: proline is first activated by ATP to form Pro-AMP and then transferred to the acceptor end of tRNA(Pro). As ProRS can inadvertently accommodate and process non-cognate amino acids such as alanine and cysteine, to avoid such errors it has two additional distinct editing activities against alanine. One activity is designated as 'pretransfer' editing and involves the tRNA(Pro)-independent hydrolysis of activated Ala-AMP. The other activity is designated 'posttransfer' editing and involves deacylation of mischarged Ala-tRNA(Pro). The misacylated Cys-tRNA(Pro) is not edited by ProRS. The sequence is that of Proline--tRNA ligase from Thermodesulfovibrio yellowstonii (strain ATCC 51303 / DSM 11347 / YP87).